Here is a 393-residue protein sequence, read N- to C-terminus: G protein-activated inward rectifier potassium channel 3 (393 aa).

Residues 1 to 23 (MAQENAAFSPGQEEPPRRRGRQR) form a disordered region. Over 1-57 (MAQENAAFSPGQEEPPRRRGRQRYVEKDGRCNVQQGNVRETYRYLTDLFTTLVDLQW) the chain is Cytoplasmic. Residues 58-82 (RLSLLFFVLAYALTWLFFGAIWWLI) form a helical membrane-spanning segment. At 83–106 (AYGRGDLEHLEDTAWTPCVNNLNG) the chain is on the extracellular side. Residues 107–118 (FVAAFLFSIETE) constitute an intramembrane region (helical; Pore-forming). Positions 119 to 125 (TTIGYGH) form an intramembrane region, pore-forming. The Selectivity filter motif lies at 120-125 (TIGYGH). The Extracellular portion of the chain corresponds to 126–134 (RVITDQCPE). Residues 135-156 (GIVLLLLQAILGSMVNAFMVGC) form a helical membrane-spanning segment. At 157-393 (MFVKISQPNK…LPPPESESKV (237 aa)) the chain is on the cytoplasmic side. Residues 360-393 (KVEEEGAGEGAGGEAGADKEQNGCLPPPESESKV) form a disordered region. The segment covering 384–393 (LPPPESESKV) has biased composition (pro residues). Residues 390–393 (ESKV) carry the PDZ-binding motif.

The protein belongs to the inward rectifier-type potassium channel (TC 1.A.2.1) family. KCNJ9 subfamily. In terms of assembly, associates with KCNJ3/GIRK1 to form a G-protein-activated heteromultimer pore-forming unit. Interacts (via PDZ-binding motif) with SNX27 (via PDZ domain); the interaction is required when endocytosed to prevent degradation in lysosomes and promote recycling to the plasma membrane.

It is found in the membrane. The catalysed reaction is K(+)(in) = K(+)(out). In terms of biological role, inward rectifier potassium channels are characterized by a greater tendency to allow potassium to flow into the cell rather than out of it. Their voltage dependence is regulated by the concentration of extracellular potassium; as external potassium is raised, the voltage range of the channel opening shifts to more positive voltages. The inward rectification is mainly due to the blockage of outward current by internal magnesium, This receptor is controlled by G proteins. Unable to produce channel activity when expressed alone. Forms a functional channel in association with KCNJ3/GIRK1. The polypeptide is G protein-activated inward rectifier potassium channel 3 (KCNJ9) (Homo sapiens (Human)).